A 443-amino-acid chain; its full sequence is Xaa-Pro dipeptidase (443 aa).

Mn(2+) contacts are provided by D246, D257, H339, E384, and E423.

The protein belongs to the peptidase M24B family. Bacterial-type prolidase subfamily. Requires Mn(2+) as cofactor.

It carries out the reaction Xaa-L-Pro dipeptide + H2O = an L-alpha-amino acid + L-proline. Splits dipeptides with a prolyl residue in the C-terminal position. The chain is Xaa-Pro dipeptidase from Pectobacterium atrosepticum (strain SCRI 1043 / ATCC BAA-672) (Erwinia carotovora subsp. atroseptica).